Here is a 276-residue protein sequence, read N- to C-terminus: Formamidopyrimidine-DNA glycosylase (276 aa).

The active-site Schiff-base intermediate with DNA is Pro-2. Glu-3 acts as the Proton donor in catalysis. The active-site Proton donor; for beta-elimination activity is the Lys-60. The DNA site is built by His-93 and Arg-112. Residues His-240–Pro-274 form an FPG-type zinc finger. Residue Arg-264 is the Proton donor; for delta-elimination activity of the active site.

This sequence belongs to the FPG family. Monomer. Zn(2+) is required as a cofactor.

The enzyme catalyses Hydrolysis of DNA containing ring-opened 7-methylguanine residues, releasing 2,6-diamino-4-hydroxy-5-(N-methyl)formamidopyrimidine.. It catalyses the reaction 2'-deoxyribonucleotide-(2'-deoxyribose 5'-phosphate)-2'-deoxyribonucleotide-DNA = a 3'-end 2'-deoxyribonucleotide-(2,3-dehydro-2,3-deoxyribose 5'-phosphate)-DNA + a 5'-end 5'-phospho-2'-deoxyribonucleoside-DNA + H(+). In terms of biological role, involved in base excision repair of DNA damaged by oxidation or by mutagenic agents. Acts as a DNA glycosylase that recognizes and removes damaged bases. Has a preference for oxidized purines, such as 7,8-dihydro-8-oxoguanine (8-oxoG). Has AP (apurinic/apyrimidinic) lyase activity and introduces nicks in the DNA strand. Cleaves the DNA backbone by beta-delta elimination to generate a single-strand break at the site of the removed base with both 3'- and 5'-phosphates. This is Formamidopyrimidine-DNA glycosylase from Shouchella clausii (strain KSM-K16) (Alkalihalobacillus clausii).